A 621-amino-acid chain; its full sequence is Chaperone protein HscA homolog (621 aa).

Belongs to the heat shock protein 70 family.

In terms of biological role, chaperone involved in the maturation of iron-sulfur cluster-containing proteins. Has a low intrinsic ATPase activity which is markedly stimulated by HscB. The protein is Chaperone protein HscA homolog of Cupriavidus metallidurans (strain ATCC 43123 / DSM 2839 / NBRC 102507 / CH34) (Ralstonia metallidurans).